The following is a 136-amino-acid chain: MSTCNYSPKEKPVDVNNVSEKSAAVNNVPEKPAIVNNTSEKAVDVNNVSEKPVDVNNVSEKSAAVNNALEKPAGANNIPEKSAGRMTSSEWIAEYWKGIKRGNDVPCCCPRKMTSADEKFPVFCKGYLMRSMHKDD.

The disordered stretch occupies residues Asn66–Met86.

This sequence belongs to the asfivirus DP96R family.

Functionally, inhibits cGAS-STING-mediated type I IFN expression and NF-kB activation by inhibiting TBK1 and IKBKB/IKKB. Inhibits host TBK1 phosphorylation. The sequence is that of TBK1 inhibitor DP96R from Ornithodoros (relapsing fever ticks).